The following is a 434-amino-acid chain: Enolase (434 aa).

(2R)-2-phosphoglycerate is bound at residue glutamine 165. Glutamate 207 functions as the Proton donor in the catalytic mechanism. Aspartate 244, glutamate 291, and aspartate 318 together coordinate Mg(2+). 4 residues coordinate (2R)-2-phosphoglycerate: lysine 343, arginine 372, serine 373, and lysine 394. The Proton acceptor role is filled by lysine 343.

This sequence belongs to the enolase family. The cofactor is Mg(2+).

The protein resides in the cytoplasm. It is found in the secreted. The protein localises to the cell surface. It catalyses the reaction (2R)-2-phosphoglycerate = phosphoenolpyruvate + H2O. It participates in carbohydrate degradation; glycolysis; pyruvate from D-glyceraldehyde 3-phosphate: step 4/5. Functionally, catalyzes the reversible conversion of 2-phosphoglycerate (2-PG) into phosphoenolpyruvate (PEP). It is essential for the degradation of carbohydrates via glycolysis. In Staphylococcus aureus (strain USA300 / TCH1516), this protein is Enolase.